Here is an 85-residue protein sequence, read N- to C-terminus: Cell division topological specificity factor (85 aa).

It belongs to the MinE family.

Functionally, prevents the cell division inhibition by proteins MinC and MinD at internal division sites while permitting inhibition at polar sites. This ensures cell division at the proper site by restricting the formation of a division septum at the midpoint of the long axis of the cell. This chain is Cell division topological specificity factor, found in Shewanella baltica (strain OS223).